A 392-amino-acid polypeptide reads, in one-letter code: Outer membrane protein assembly factor BamB (392 aa).

The first 19 residues, 1-19 (MQLRKLLLPGLLSVTLLSG), serve as a signal peptide directing secretion. C20 carries the N-palmitoyl cysteine lipid modification. The S-diacylglycerol cysteine moiety is linked to residue C20.

Belongs to the BamB family. In terms of assembly, part of the Bam complex, which is composed of the outer membrane protein BamA, and four lipoproteins BamB, BamC, BamD and BamE.

Its subcellular location is the cell outer membrane. In terms of biological role, part of the outer membrane protein assembly complex, which is involved in assembly and insertion of beta-barrel proteins into the outer membrane. The protein is Outer membrane protein assembly factor BamB of Shigella dysenteriae serotype 1 (strain Sd197).